Here is a 241-residue protein sequence, read N- to C-terminus: Accessory protein p30II (241 aa).

Short sequence motifs (nuclear localization signal) lie at residues 73–78 (RRCRSR) and 91–98 (GPRRSRPR). 2 stretches are compositionally biased toward low complexity: residues 79 to 100 (CVSPRGGAFSPGGPRRSRPRLS) and 107 to 136 (PSSTASSSSLSFNSSSKDNSPSTNSSTSRS). Positions 79-151 (CVSPRGGAFS…GKHRNSPADT (73 aa)) are disordered. Positions 175–184 (LRVWRLCTRR) match the Mitochondrial targeting signal motif.

It belongs to the HTLV-1 accessory protein p30II family. As to quaternary structure, p30II binds to the KIX domains of CREBBP and EP300.

The protein localises to the host nucleus. It is found in the host nucleolus. The protein resides in the host mitochondrion inner membrane. Functionally, p30II is a multifunctional regulator that sequesters EP300/CREBBP and down-regulates CREB-responsive element (CRE) and Tax-responsive element (TRE) mediated transcription. Specifically binds and represses tax/rex mRNA nuclear export. Since Tax and Rex are positive regulators of viral gene expression, their inhibition by p30II reduces virion production, and allows the virus to escape the host immune surveillance and persist latently in an immune-competent host. P13II increases mitochondrial permeability to monovalent cations, producing a rapid, membrane potential-dependent influx of potassium. This could involve a channel-forming activity. Interferes with cell proliferation and transformation and promotes apoptosis induced by ceramide and Fas ligand, probably using the Ras signaling. This chain is Accessory protein p30II, found in Human T-cell leukemia virus 1 (strain Japan ATK-1 subtype A) (HTLV-1).